The primary structure comprises 200 residues: 7-methyl-GTP pyrophosphatase (200 aa).

Residue aspartate 75 is the Proton acceptor of the active site.

It belongs to the Maf family. YceF subfamily. It depends on a divalent metal cation as a cofactor.

The protein localises to the cytoplasm. The enzyme catalyses N(7)-methyl-GTP + H2O = N(7)-methyl-GMP + diphosphate + H(+). Functionally, nucleoside triphosphate pyrophosphatase that hydrolyzes 7-methyl-GTP (m(7)GTP). May have a dual role in cell division arrest and in preventing the incorporation of modified nucleotides into cellular nucleic acids. In Hydrogenovibrio crunogenus (strain DSM 25203 / XCL-2) (Thiomicrospira crunogena), this protein is 7-methyl-GTP pyrophosphatase.